Here is a 3391-residue protein sequence, read N- to C-terminus: Genome polyprotein (3391 aa).

The interaction with host EXOC1 stretch occupies residues 1–15; the sequence is MNDQRKEAKNTPFNM. The Cytoplasmic segment spans residues 1-101; it reads MNDQRKEAKN…LNILNRRRRS (101 aa). Positions 37-72 are hydrophobic; homodimerization of capsid protein C; sequence MLQGRGPLKLYMALVAFLRFLTIPPTAGILKRWGTI. The propeptide at 101 to 114 is ER anchor for the Capsid protein C, removed in mature form by serine protease NS3; the sequence is SAGMIIMLIPTVMA. Residues 101-114 constitute a propeptide, ER anchor for the capsid protein C, removed in mature form by serine protease NS3; sequence SAGMIIMLIPTVMA. A helical membrane pass occupies residues 102 to 122; the sequence is AGMIIMLIPTVMAFHLTTRNG. The Extracellular segment spans residues 123-242; sequence EPHMIVSRQE…HVQRIETWIL (120 aa). N183 is a glycosylation site (N-linked (GlcNAc...) asparagine; by host). Residues 243 to 260 traverse the membrane as a helical segment; the sequence is RHPGFTMMAAILAYTIGT. Position 261 (T261) is a topological domain, cytoplasmic. Residues 262–280 traverse the membrane as a helical segment; that stretch reads HFQRALILILLTAVTPSMT. Over 281–727 the chain is Extracellular; it reads MRCIGMSNRD…QVFGAIYGAA (447 aa). 4 cysteine pairs are disulfide-bonded: C283–C310, C340–C401, C354–C385, and C372–C396. An N-linked (GlcNAc...) asparagine; by host glycan is attached at N347. The tract at residues 378 to 391 is fusion peptide; sequence DRGWGNGCGLFGKG. A glycan (N-linked (GlcNAc...) asparagine; by host) is linked at N433. Disulfide bonds link C465/C565 and C582/C613. The helical transmembrane segment at 728 to 748 threads the bilayer; sequence FSGVSWTMKILIGVIITWIGM. The Cytoplasmic portion of the chain corresponds to 749 to 752; it reads NSRS. A helical membrane pass occupies residues 753 to 773; it reads TSLSVTLVLVGIVTLYLGVMV. Over 774-1195 the chain is Extracellular; sequence QADSGCVVSW…MVGATMTDDI (422 aa). Cystine bridges form between C779/C790, C830/C918, C954/C998, C1055/C1104, C1066/C1088, and C1087/C1091. N-linked (GlcNAc...) asparagine; by host glycosylation is found at N905 and N982. A glycan (N-linked (GlcNAc...) asparagine; by host) is linked at N1134. Residues 1196–1220 traverse the membrane as a helical segment; sequence GMGVTYLALLAAFKVRPTFAAGLLL. The Cytoplasmic segment spans residues 1221–1226; sequence RKLTSK. Residues 1227–1245 traverse the membrane as a helical segment; sequence ELMMTTIGIVLSSQSTIPE. Residues 1246-1269 are Lumenal-facing; it reads TILELTDALALGMMVLKMVRNMEK. Residues 1270–1290 form a helical membrane-spanning segment; it reads YQLAVTIMAILCVPNAVILQN. A topological domain (cytoplasmic) is located at residue A1291. The helical transmembrane segment at 1292 to 1310 threads the bilayer; it reads WKVSCTILAVVSVSPLFLT. Residues 1311–1317 lie on the Lumenal side of the membrane; that stretch reads SSQQKTD. Residues 1318–1338 traverse the membrane as a helical segment; that stretch reads WIPLALTIKGLNPTAIFLTTL. Topologically, residues 1339–1346 are cytoplasmic; that stretch reads SRTSKKRS. Residues 1347-1367 traverse the membrane as a helical segment; it reads WPLNEAIMAVGMVSILASSLL. Residues 1368–1370 are Lumenal-facing; it reads KND. The chain crosses the membrane as a helical span at residues 1371–1391; the sequence is IPMTGPLVAGGLLTVCYVLTG. The Cytoplasmic segment spans residues 1392–1447; it reads RSADLELERAADVKWEDQAEISGSSPILSITISEDGSMSIKNEEEEQTLTILIRRG. Positions 1398-1437 are interacts with and activates NS3 protease; it reads LERAADVKWEDQAEISGSSPILSITISEDGSMSIKNEEEE. Positions 1448 to 1468 form an intramembrane region, helical; sequence LLVISGLFPVSIPITAAAWYL. Residues 1469–2147 lie on the Cytoplasmic side of the membrane; sequence WEVKKQRAGV…LSELPETLET (679 aa). One can recognise a Peptidase S7 domain in the interval 1476–1653; the sequence is AGVLWDVPSP…EKSIEDNPEI (178 aa). Catalysis depends on charge relay system; for serine protease NS3 activity residues H1526, D1550, and S1610. The region spanning 1655–1811 is the Helicase ATP-binding domain; it reads DDIFRKRRLT…QSNAPIIDEE (157 aa). An important for RNA-binding region spans residues 1659 to 1662; sequence RKRR. ATP is bound at residue 1668–1675; sequence LHPGAGKT. The short motif at 1759–1762 is the DEAH box element; the sequence is DEAH. Residues 1821–1988 enclose the Helicase C-terminal domain; it reads SGHEWVTDFK…IIPSMFEPER (168 aa). K1863 carries the post-translational modification N6-acetyllysine; by host. The chain crosses the membrane as a helical span at residues 2148–2168; the sequence is LLLLTLLATVTGGIFLFLMSA. The Lumenal portion of the chain corresponds to 2169-2170; that stretch reads RG. The helical intramembrane region spans 2171–2191; the sequence is IGKMTLGMCCIITASILLWYA. A topological domain (lumenal) is located at residue Q2192. The helical transmembrane segment at 2193-2213 threads the bilayer; the sequence is IQPHWIAASIILEFFLIVLLI. Topologically, residues 2214-2228 are cytoplasmic; it reads PEPEKQRTPQDNQLT. Residues 2229–2249 traverse the membrane as a helical segment; sequence YVVIAILTVVAATMANEMGFL. Topologically, residues 2250–2274 are lumenal; sequence EKTKKDLGLGSIATQQPESNILDID. The segment at residues 2275–2295 is an intramembrane region (helical); it reads LRPASAWTLYAVATTFVTPML. Residues 2296-2316 lie on the Lumenal side of the membrane; the sequence is RHSIENSSVNVSLTAIANQAT. Residues N2301 and N2305 are each glycosylated (N-linked (GlcNAc...) asparagine; by host). An intramembrane region (helical) is located at residues 2317–2337; it reads VLMGLGKGWPLSKMDIGVPLL. Residues 2338 to 2347 lie on the Lumenal side of the membrane; the sequence is AIGCYSQVNP. Residues 2348 to 2368 form a helical membrane-spanning segment; sequence TTLTAALFLLVAHYAIIGPAL. Residues 2369 to 2413 lie on the Cytoplasmic side of the membrane; that stretch reads QAKASREAQKRAAAGIMKNPTVDGITVIDLDPIPYDPKFEKQLGQ. The chain crosses the membrane as a helical span at residues 2414–2434; it reads VMLLVLCVTQVLMMRTTWALC. Over 2435 to 2459 the chain is Lumenal; the sequence is EALTLATGPISTLSEGNPGRFWNTT. N-linked (GlcNAc...) asparagine; by host glycosylation occurs at N2457. The chain crosses the membrane as a helical span at residues 2460 to 2480; it reads IAVSMANIFRGSYLAGAGLLF. At 2481 to 3391 the chain is on the cytoplasmic side; it reads SIMKNTTNTR…REEEEAGVLW (911 aa). An mRNA cap 0-1 NS5-type MT domain is found at 2493 to 2755; it reads TGNIGETLGE…DVDLGSGTRN (263 aa). An S-adenosyl-L-methionine-binding site is contributed by S2547. S2547 is modified (phosphoserine). K2552 (for 2'-O-MTase activity) is an active-site residue. The SUMO-interacting motif signature appears at 2568–2571; that stretch reads VVDL. S-adenosyl-L-methionine-binding residues include G2577, W2578, T2595, K2596, D2622, and V2623. The active-site For 2'-O-MTase activity is D2637. I2638 lines the S-adenosyl-L-methionine pocket. Active-site for 2'-O-MTase activity residues include K2672 and E2708. Y2710 lines the S-adenosyl-L-methionine pocket. Residues E2929, H2933, C2938, and C2941 each contribute to the Zn(2+) site. The region spanning 3020-3169 is the RdRp catalytic domain; that stretch reads AMYADDTAGW…PLDDRLPSAL (150 aa). Zn(2+) is bound by residues H3203, C3219, and C3338.

This sequence in the N-terminal section; belongs to the class I-like SAM-binding methyltransferase superfamily. mRNA cap 0-1 NS5-type methyltransferase family. As to quaternary structure, homodimer. Interacts (via N-terminus) with host EXOC1 (via C-terminus); this interaction results in EXOC1 degradation through the proteasome degradation pathway. Forms heterodimers with envelope protein E in the endoplasmic reticulum and Golgi. In terms of assembly, homodimer; in the endoplasmic reticulum and Golgi. Interacts with protein prM. Interacts with non-structural protein 1. As to quaternary structure, homodimer; Homohexamer when secreted. Interacts with envelope protein E. Interacts with host PRKAA1. Interacts (via N-terminus) with serine protease NS3. In terms of assembly, forms a heterodimer with serine protease NS3. May form homooligomers. As to quaternary structure, forms a heterodimer with NS2B. Interacts with NS4B. Interacts with unphosphorylated RNA-directed RNA polymerase NS5; this interaction stimulates RNA-directed RNA polymerase NS5 guanylyltransferase activity. Interacts with host SHFL. Interacts with host MAVS; this interaction inhibits the synthesis of IFN-beta. Interacts with host SHFL. Interacts with host AUP1; the interaction occurs in the presence of Dengue virus NS4B and induces lipophagy which facilitates production of virus progeny particles. May interact with host SRPRA and SEC61G. In terms of assembly, interacts with serine protease NS3. As to quaternary structure, homodimer. Interacts with host STAT2; this interaction inhibits the phosphorylation of the latter, and, when all viral proteins are present (polyprotein), targets STAT2 for degradation. Interacts with serine protease NS3. Interacts with host PAF1 complex; the interaction may prevent the recruitment of the PAF1 complex to interferon-responsive genes, and thus reduces the immune response. Post-translationally, specific enzymatic cleavages in vivo yield mature proteins. Cleavages in the lumen of endoplasmic reticulum are performed by host signal peptidase, whereas cleavages in the cytoplasmic side are performed by serine protease NS3. Signal cleavage at the 2K-4B site requires a prior NS3 protease-mediated cleavage at the 4A-2K site. Cleaved in post-Golgi vesicles by a host furin, releasing the mature small envelope protein M, and peptide pr. This cleavage is incomplete as up to 30% of viral particles still carry uncleaved prM. In terms of processing, N-glycosylated. Post-translationally, N-glycosylated. The excreted form is glycosylated and this is required for efficient secretion of the protein from infected cells. Acetylated by host KAT5. Acetylation modulates NS3 RNA-binding and unwinding activities and plays an important positive role for viral replication. In terms of processing, sumoylation of RNA-directed RNA polymerase NS5 increases NS5 protein stability allowing proper viral RNA replication. Post-translationally, phosphorylated on serines residues. This phosphorylation may trigger NS5 nuclear localization.

The protein resides in the virion. It is found in the host nucleus. Its subcellular location is the host cytoplasm. It localises to the host perinuclear region. The protein localises to the secreted. The protein resides in the virion membrane. It is found in the host endoplasmic reticulum membrane. Its subcellular location is the host mitochondrion. It catalyses the reaction Selective hydrolysis of -Xaa-Xaa-|-Yaa- bonds in which each of the Xaa can be either Arg or Lys and Yaa can be either Ser or Ala.. It carries out the reaction RNA(n) + a ribonucleoside 5'-triphosphate = RNA(n+1) + diphosphate. The catalysed reaction is a ribonucleoside 5'-triphosphate + H2O = a ribonucleoside 5'-diphosphate + phosphate + H(+). The enzyme catalyses ATP + H2O = ADP + phosphate + H(+). It catalyses the reaction a 5'-end (5'-triphosphoguanosine)-ribonucleoside in mRNA + S-adenosyl-L-methionine = a 5'-end (N(7)-methyl 5'-triphosphoguanosine)-ribonucleoside in mRNA + S-adenosyl-L-homocysteine. It carries out the reaction a 5'-end (N(7)-methyl 5'-triphosphoguanosine)-ribonucleoside in mRNA + S-adenosyl-L-methionine = a 5'-end (N(7)-methyl 5'-triphosphoguanosine)-(2'-O-methyl-ribonucleoside) in mRNA + S-adenosyl-L-homocysteine + H(+). In terms of biological role, plays a role in virus budding by binding to the cell membrane and gathering the viral RNA into a nucleocapsid that forms the core of a mature virus particle. During virus entry, may induce genome penetration into the host cytoplasm after hemifusion induced by the surface proteins. Can migrate to the cell nucleus where it modulates host functions. Overcomes the anti-viral effects of host EXOC1 by sequestering and degrading the latter through the proteasome degradation pathway. Its function is as follows. Inhibits RNA silencing by interfering with host Dicer. Functionally, prevents premature fusion activity of envelope proteins in trans-Golgi by binding to envelope protein E at pH6.0. After virion release in extracellular space, gets dissociated from E dimers. Acts as a chaperone for envelope protein E during intracellular virion assembly by masking and inactivating envelope protein E fusion peptide. prM is the only viral peptide matured by host furin in the trans-Golgi network probably to avoid catastrophic activation of the viral fusion activity in acidic Golgi compartment prior to virion release. prM-E cleavage is inefficient, and many virions are only partially matured. These uncleaved prM would play a role in immune evasion. In terms of biological role, may play a role in virus budding. Exerts cytotoxic effects by activating a mitochondrial apoptotic pathway through M ectodomain. May display a viroporin activity. Its function is as follows. Binds to host cell surface receptor and mediates fusion between viral and cellular membranes. Envelope protein is synthesized in the endoplasmic reticulum in the form of heterodimer with protein prM. They play a role in virion budding in the ER, and the newly formed immature particle is covered with 60 spikes composed of heterodimer between precursor prM and envelope protein E. The virion is transported to the Golgi apparatus where the low pH causes dissociation of PrM-E heterodimers and formation of E homodimers. prM-E cleavage is inefficient, and many virions are only partially matured. These uncleaved prM would play a role in immune evasion. Functionally, involved in immune evasion, pathogenesis and viral replication. Once cleaved off the polyprotein, is targeted to three destinations: the viral replication cycle, the plasma membrane and the extracellular compartment. Essential for viral replication. Required for formation of the replication complex and recruitment of other non-structural proteins to the ER-derived membrane structures. Excreted as a hexameric lipoparticle that plays a role against host immune response. Antagonizing the complement function. Binds to the host macrophages and dendritic cells. Inhibits signal transduction originating from Toll-like receptor 3 (TLR3). Mediates complement activation, which may contribute to the pathogenesis of the vascular leakage that occurs in severe dengue disease. Activates autophagy through the AMPK/ERK/mTOR signaling pathway. Mechanistically, acts as the assembly platform for STK11-AMPK interactions and promotes STK11-AMPK interactions. In turn, promotes phosphorylation of the AMPK kinase structural domain and activates AMPK, thereby positively regulating the AMPK/ERK/mTOR signaling pathway and inducing autophagy. Disrupts the host endothelial glycocalyx layer of host pulmonary microvascular endothelial cells, inducing degradation of sialic acid and shedding of heparan sulfate proteoglycans. NS1 induces expression of sialidases, heparanase, and activates cathepsin L, which activates heparanase via enzymatic cleavage. These effects are probably linked to the endothelial hyperpermeability observed in severe dengue disease. In terms of biological role, component of the viral RNA replication complex that functions in virion assembly and antagonizes the host immune response. Its function is as follows. Required cofactor for the serine protease function of NS3. May have membrane-destabilizing activity and form viroporins. Functionally, displays three enzymatic activities: serine protease, NTPase and RNA helicase. NS3 serine protease, in association with NS2B, performs its autocleavage and cleaves the polyprotein at dibasic sites in the cytoplasm: C-prM, NS2A-NS2B, NS2B-NS3, NS3-NS4A, NS4A-2K and NS4B-NS5. NS3 RNA helicase binds RNA and unwinds dsRNA in the 3' to 5' direction. Regulates the ATPase activity of the NS3 helicase activity. NS4A allows NS3 helicase to conserve energy during unwinding. Plays a role in the inhibition of the host innate immune response. Interacts with host MAVS and thereby prevents the interaction between RIGI and MAVS. In turn, IFN-beta production is impaired. Interacts with host AUP1 which mediates induction of lipophagy in host cells and facilitates production of virus progeny particles. In terms of biological role, functions as a signal peptide for NS4B and is required for the interferon antagonism activity of the latter. Its function is as follows. Induces the formation of ER-derived membrane vesicles where the viral replication takes place. Inhibits interferon (IFN)-induced host STAT1 phosphorylation and nuclear translocation, thereby preventing the establishment of cellular antiviral state by blocking the IFN-alpha/beta pathway. Functionally, replicates the viral (+) and (-) RNA genome, and performs the capping of genomes in the cytoplasm. NS5 methylates viral RNA cap at guanine N-7 and ribose 2'-O positions. Besides its role in RNA genome replication, also prevents the establishment of cellular antiviral state by blocking the interferon-alpha/beta (IFN-alpha/beta) signaling pathway. Inhibits host TYK2 and STAT2 phosphorylation, thereby preventing activation of JAK-STAT signaling pathway. May reduce immune responses by preventing the recruitment of the host PAF1 complex to interferon-responsive genes. This is Genome polyprotein from Dengue virus type 2 (strain 16681-PDK53) (DENV-2).